The chain runs to 1439 residues: DNA-directed RNA polymerase subunit beta' (1439 aa).

Zn(2+)-binding residues include Cys70, Cys72, Cys85, and Cys88. Residues Asp504, Asp506, and Asp508 each contribute to the Mg(2+) site. Zn(2+)-binding residues include Cys862, Cys936, Cys943, and Cys946.

Belongs to the RNA polymerase beta' chain family. As to quaternary structure, the RNAP catalytic core consists of 2 alpha, 1 beta, 1 beta' and 1 omega subunit. When a sigma factor is associated with the core the holoenzyme is formed, which can initiate transcription. Mg(2+) is required as a cofactor. The cofactor is Zn(2+).

The catalysed reaction is RNA(n) + a ribonucleoside 5'-triphosphate = RNA(n+1) + diphosphate. DNA-dependent RNA polymerase catalyzes the transcription of DNA into RNA using the four ribonucleoside triphosphates as substrates. The sequence is that of DNA-directed RNA polymerase subunit beta' from Gluconobacter oxydans (strain 621H) (Gluconobacter suboxydans).